A 237-amino-acid chain; its full sequence is Sulfhydrogenase 2 subunit delta (237 aa).

The [4Fe-4S] cluster site is built by cysteine 11, cysteine 14, cysteine 83, cysteine 132, cysteine 160, cysteine 163, cysteine 170, and cysteine 179. [3Fe-4S] cluster-binding residues include cysteine 188, cysteine 192, cysteine 199, and cysteine 202.

It belongs to the [NiFe]/[NiFeSe] hydrogenase small subunit family. In terms of assembly, dimer of heterotetramer of alpha, beta, gamma and delta subunits. The nickel-containing alpha and delta subunits constitute the hydrogenase activity. The beta and gamma subunits (flavin-containing dimer) constitute the sulfur reductase activity. The cofactor is Ni(2+). [4Fe-4S] cluster is required as a cofactor. It depends on [3Fe-4S] cluster as a cofactor.

It localises to the cytoplasm. The enzyme catalyses H2 + NADP(+) = NADPH + H(+). It carries out the reaction H2 + NAD(+) = NADH + H(+). Part of a bifunctional enzyme complex that functions as a hydrogen-evolving hydrogenase with sulfur-reducing activity. May play a role in hydrogen cycling during fermentative growth. Activity exhibited with NAD in addition to NADPH. The alpha and delta subunits form the hydrogenase component that catalyzes the reduction of protons to evolve hydrogen. This Pyrococcus furiosus (strain ATCC 43587 / DSM 3638 / JCM 8422 / Vc1) protein is Sulfhydrogenase 2 subunit delta.